Consider the following 253-residue polypeptide: Chitooligosaccharide deacetylase (253 aa).

Mg(2+) contacts are provided by H61 and H125.

The protein belongs to the YdjC deacetylase family. ChbG subfamily. In terms of assembly, homodimer. Mg(2+) serves as cofactor.

It localises to the cytoplasm. The catalysed reaction is N,N'-diacetylchitobiose + H2O = N-acetyl-beta-D-glucosaminyl-(1-&gt;4)-D-glucosamine + acetate. It carries out the reaction diacetylchitobiose-6'-phosphate + H2O = N'-monoacetylchitobiose-6'-phosphate + acetate. The protein operates within glycan degradation; chitin degradation. Its function is as follows. Involved in the degradation of chitin. ChbG is essential for growth on the acetylated chitooligosaccharides chitobiose and chitotriose but is dispensable for growth on cellobiose and chitosan dimer, the deacetylated form of chitobiose. Deacetylation of chitobiose-6-P and chitotriose-6-P is necessary for both the activation of the chb promoter by the regulatory protein ChbR and the hydrolysis of phosphorylated beta-glucosides by the phospho-beta-glucosidase ChbF. Catalyzes the removal of only one acetyl group from chitobiose-6-P to yield monoacetylchitobiose-6-P, the inducer of ChbR and the substrate of ChbF. In Proteus mirabilis (strain HI4320), this protein is Chitooligosaccharide deacetylase.